We begin with the raw amino-acid sequence, 711 residues long: Amino-acid racemase (711 aa).

Residues 1–14 lie on the Cytoplasmic side of the membrane; the sequence is MTKNESYSGIDYFR. The helical transmembrane segment at 15 to 35 threads the bilayer; the sequence is FIAALLIVAIHTSPLFSFSET. Topologically, residues 36-37 are extracellular; it reads GN. Residues 38–58 traverse the membrane as a helical segment; sequence FIFTRIVAPVAVPFFFMTSGF. Topologically, residues 59–78 are cytoplasmic; sequence FLISRYTCNAEKLGAFIKKT. Residues 79–99 traverse the membrane as a helical segment; sequence TLIYGVAILLYIPINVYNGYF. Topologically, residues 100 to 117 are extracellular; it reads KMDNLLPNIIKDIVFDGT. A helical membrane pass occupies residues 118 to 138; sequence LYHLWYLPASIIGAAIAWYLV. Residues 139 to 146 are Cytoplasmic-facing; sequence KKVHYRKA. The helical transmembrane segment at 147–167 threads the bilayer; sequence FLIASILYIIGLFGDSYYGIV. Over 168 to 188 the chain is Extracellular; sequence KSVSCLNVFYNLIFQLTDYTR. Residues 189–209 traverse the membrane as a helical segment; it reads NGIFFAPIFFVLGGYISDSPN. Topologically, residues 210 to 241 are cytoplasmic; sequence RYRKKNYIRIYSLFCLMFGKTLTLQHFDIQKH. Residues 242–262 form a helical membrane-spanning segment; it reads DSMYVLLLPSVWCLFNLLLHF. The Extracellular portion of the chain corresponds to 263-306; that stretch reads RGKRRTGLRTISLDQLYHSSVYDCCNTIVCAELLHLQSLLVENS. The helical transmembrane segment at 307-327 threads the bilayer; it reads LVHYIAVCFASVVLAVVITAL. Topologically, residues 328–711 are cytoplasmic; that stretch reads LSSLKPKKAK…EHRLNIIRRA (384 aa). The tract at residues 336–711 is racemase; sequence AKHTADTDRA…EHRLNIIRRA (376 aa). K376 functions as the Proton acceptor in the catalytic mechanism. K376 is subject to N6-(pyridoxal phosphate)lysine. R470 contributes to the substrate binding site. Y602 acts as the Proton acceptor in catalysis. M651 contributes to the substrate binding site.

The protein in the N-terminal section; belongs to the acyltransferase 3 family. It in the C-terminal section; belongs to the alanine racemase family. Pyridoxal 5'-phosphate is required as a cofactor.

It localises to the cell membrane. The chain is Amino-acid racemase (vanTG) from Enterococcus faecalis (Streptococcus faecalis).